A 174-amino-acid polypeptide reads, in one-letter code: Shikimate kinase (174 aa).

10-15 (GSGKTA) contacts ATP. Mg(2+) is bound at residue threonine 14. Substrate is bound by residues aspartate 32, arginine 56, and glycine 78. Arginine 118 provides a ligand contact to ATP. Position 137 (arginine 137) interacts with substrate. Arginine 154 provides a ligand contact to ATP.

Belongs to the shikimate kinase family. As to quaternary structure, monomer. Requires Mg(2+) as cofactor.

It is found in the cytoplasm. The enzyme catalyses shikimate + ATP = 3-phosphoshikimate + ADP + H(+). The protein operates within metabolic intermediate biosynthesis; chorismate biosynthesis; chorismate from D-erythrose 4-phosphate and phosphoenolpyruvate: step 5/7. Functionally, catalyzes the specific phosphorylation of the 3-hydroxyl group of shikimic acid using ATP as a cosubstrate. This is Shikimate kinase from Symbiobacterium thermophilum (strain DSM 24528 / JCM 14929 / IAM 14863 / T).